The primary structure comprises 513 residues: Maturase K (513 aa).

This sequence belongs to the intron maturase 2 family. MatK subfamily.

It is found in the plastid. The protein resides in the chloroplast. Functionally, usually encoded in the trnK tRNA gene intron. Probably assists in splicing its own and other chloroplast group II introns. This is Maturase K from Cyrilla racemiflora (Swamp titi).